Reading from the N-terminus, the 290-residue chain is 4-hydroxybenzoate octaprenyltransferase (290 aa).

A run of 8 helical transmembrane segments spans residues 33–53, 91–111, 116–136, 138–158, 165–185, 212–232, 237–257, and 269–289; these read LAALWVAADGFPGWHLLAVFV, LGVREAALVGVVLTLVAFVLV, WEAVAWSVPAVLFTILYPFTK, FFAMPQAFLGIAFNFGIVIAF, VPATAWVLWLANLFLVLAYDT, VAAIMGFFVLCLGLTAWVLAP, WPLWLGLGVAAAQVAWHFTLI, and FSKSHWIGAAIFAGVALGYLL.

The protein belongs to the UbiA prenyltransferase family. Mg(2+) serves as cofactor.

The protein resides in the cell inner membrane. The catalysed reaction is all-trans-octaprenyl diphosphate + 4-hydroxybenzoate = 4-hydroxy-3-(all-trans-octaprenyl)benzoate + diphosphate. It participates in cofactor biosynthesis; ubiquinone biosynthesis. Its function is as follows. Catalyzes the prenylation of para-hydroxybenzoate (PHB) with an all-trans polyprenyl group. Mediates the second step in the final reaction sequence of ubiquinone-8 (UQ-8) biosynthesis, which is the condensation of the polyisoprenoid side chain with PHB, generating the first membrane-bound Q intermediate 3-octaprenyl-4-hydroxybenzoate. This is 4-hydroxybenzoate octaprenyltransferase from Acidovorax ebreus (strain TPSY) (Diaphorobacter sp. (strain TPSY)).